The sequence spans 757 residues: Catalase-peroxidase (757 aa).

The segment at residues 101–248 is a cross-link (tryptophyl-tyrosyl-methioninium (Trp-Tyr) (with M-274)); sequence WHSAGTYRIG…LAAVQMGLIY (148 aa). The active-site Proton acceptor is His102. Positions 213-232 are disordered; it reads VHHPDEHRGAKEKASKNSDS. The segment at residues 248-274 is a cross-link (tryptophyl-tyrosyl-methioninium (Tyr-Met) (with W-101)); the sequence is YVNPEGPDGCPDPLASARDIRETFARM. His289 is a heme b binding site.

The protein belongs to the peroxidase family. Peroxidase/catalase subfamily. In terms of assembly, homodimer or homotetramer. Requires heme b as cofactor. Formation of the three residue Trp-Tyr-Met cross-link is important for the catalase, but not the peroxidase activity of the enzyme.

The catalysed reaction is H2O2 + AH2 = A + 2 H2O. It catalyses the reaction 2 H2O2 = O2 + 2 H2O. Functionally, bifunctional enzyme with both catalase and broad-spectrum peroxidase activity. This Xylella fastidiosa (strain M23) protein is Catalase-peroxidase.